The following is a 130-amino-acid chain: Movement protein TGB2 (130 aa).

Residues 1–12 (MPGLTPPVNYEQ) are Cytoplasmic-facing. A helical membrane pass occupies residues 13-30 (VYKVLAIGFLLCASIYCL). The Lumenal portion of the chain corresponds to 31–72 (RSNHLPHVGDNIHSLPHGGNYADGTKRVQYFRPHSSTSTNHK). A helical transmembrane segment spans residues 73–90 (YTALCAVLTLSLLIFAQT). The Cytoplasmic portion of the chain corresponds to 91 to 130 (RLAAGNRITSVSICHHCSSQGSLSGGNHGRVSGHSELPTT). The segment at 110 to 130 (QGSLSGGNHGRVSGHSELPTT) is disordered.

It belongs to the Tymovirales TGBp2 protein family.

Its subcellular location is the host endoplasmic reticulum membrane. In terms of biological role, plays a role in viral cell-to-cell propagation, by facilitating genome transport to neighboring plant cells through plasmosdesmata,. The polypeptide is Movement protein TGB2 (Narcissus pseudonarcissus (Daffodil)).